We begin with the raw amino-acid sequence, 674 residues long: MPRRILVTSALPYANGPIHLGHLVEYIQTDIWVRFQRMRGHECYYVCADDAHGTPIMLRAQQEGVTPETLIDQCSQEHQADFADFAISFDSYHSTHSAENRTLSETIYLRNRDKGHITTRIVRQAYDPVKGMFLPDRFIRGTCPRCDALDQYGDNCEVCGATYSPTELKEAISVLSGTPPIERESEHYFFKLNDFEPLLKRWTQGGHLQPEMANKLNEWFEAGLQDWDISRDAPYFGFPIPESTDKYFYVWLDAPIGYLASFKHLCDREGLDFDSFMTPHSTAELYHFIGKDILYFHALFWPAMLHGAGFRLPTAIFAHGFLTVNGQKMSKSRGTFIKARTYLKHLNPEYLRYYFAAKLGSGIEDLDLNFDDFMSRVNADLVGKVINIASRCAGFINKHFQNRLADRLVEKSLFQKFVAASEHLAQHYEAREFGHAMREIMALADQANRYIDEQQPWVAIKDPERKQEVQEVCTLGLNLFRQLMIYLKPVLPMTTEKAEAFFNSQSLTWSDVDTPLLNHTINRFEPLMIRAEKIKIEAMIEDSKEHLQQNTNAVKPTALLAEHPIAETIQFESFAKLDLRIARILKAEQVEGADKLLRLELDLDGETRQVFAGIKAAYAPESLVGRLTVMVANLAPRKMRFGISEGMVLAAGPGGKEIYLLNPDEGARPGMRVK.

Positions 12 to 22 match the 'HIGH' region motif; it reads PYANGPIHLGH. Residues Cys143, Cys146, Cys156, and Cys159 each coordinate Zn(2+). Positions 328 to 332 match the 'KMSKS' region motif; the sequence is KMSKS. Lys331 serves as a coordination point for ATP. The tRNA-binding domain occupies 573–674; sequence SFAKLDLRIA…EGARPGMRVK (102 aa).

It belongs to the class-I aminoacyl-tRNA synthetase family. MetG type 1 subfamily. As to quaternary structure, homodimer. It depends on Zn(2+) as a cofactor.

It is found in the cytoplasm. The enzyme catalyses tRNA(Met) + L-methionine + ATP = L-methionyl-tRNA(Met) + AMP + diphosphate. In terms of biological role, is required not only for elongation of protein synthesis but also for the initiation of all mRNA translation through initiator tRNA(fMet) aminoacylation. This is Methionine--tRNA ligase from Nitrosococcus oceani (strain ATCC 19707 / BCRC 17464 / JCM 30415 / NCIMB 11848 / C-107).